The primary structure comprises 460 residues: Bifunctional protein GlmU (460 aa).

Residues 1–232 (MALNVVILAA…AIEVEGANNR (232 aa)) form a pyrophosphorylase region. Residues 8 to 11 (LAAG), lysine 22, glutamine 73, 78 to 79 (GT), 100 to 102 (YGD), glycine 137, glutamate 157, asparagine 172, and asparagine 230 each bind UDP-N-acetyl-alpha-D-glucosamine. A Mg(2+)-binding site is contributed by aspartate 102. Asparagine 230 is a Mg(2+) binding site. The interval 233–253 (VQLAQLERAYQAREAEKLMLA) is linker. An N-acetyltransferase region spans residues 254-460 (GANLRDPSRI…GWQRPVKIKK (207 aa)). UDP-N-acetyl-alpha-D-glucosamine is bound by residues arginine 336 and lysine 354. Catalysis depends on histidine 366, which acts as the Proton acceptor. 2 residues coordinate UDP-N-acetyl-alpha-D-glucosamine: tyrosine 369 and asparagine 380. Acetyl-CoA is bound by residues alanine 383, 389–390 (NY), serine 408, alanine 426, and arginine 443.

In the N-terminal section; belongs to the N-acetylglucosamine-1-phosphate uridyltransferase family. It in the C-terminal section; belongs to the transferase hexapeptide repeat family. Homotrimer. Requires Mg(2+) as cofactor.

The protein localises to the cytoplasm. The enzyme catalyses alpha-D-glucosamine 1-phosphate + acetyl-CoA = N-acetyl-alpha-D-glucosamine 1-phosphate + CoA + H(+). The catalysed reaction is N-acetyl-alpha-D-glucosamine 1-phosphate + UTP + H(+) = UDP-N-acetyl-alpha-D-glucosamine + diphosphate. It participates in nucleotide-sugar biosynthesis; UDP-N-acetyl-alpha-D-glucosamine biosynthesis; N-acetyl-alpha-D-glucosamine 1-phosphate from alpha-D-glucosamine 6-phosphate (route II): step 2/2. The protein operates within nucleotide-sugar biosynthesis; UDP-N-acetyl-alpha-D-glucosamine biosynthesis; UDP-N-acetyl-alpha-D-glucosamine from N-acetyl-alpha-D-glucosamine 1-phosphate: step 1/1. Its pathway is bacterial outer membrane biogenesis; LPS lipid A biosynthesis. Its function is as follows. Catalyzes the last two sequential reactions in the de novo biosynthetic pathway for UDP-N-acetylglucosamine (UDP-GlcNAc). The C-terminal domain catalyzes the transfer of acetyl group from acetyl coenzyme A to glucosamine-1-phosphate (GlcN-1-P) to produce N-acetylglucosamine-1-phosphate (GlcNAc-1-P), which is converted into UDP-GlcNAc by the transfer of uridine 5-monophosphate (from uridine 5-triphosphate), a reaction catalyzed by the N-terminal domain. This is Bifunctional protein GlmU from Shewanella baltica (strain OS155 / ATCC BAA-1091).